The primary structure comprises 320 residues: Malate dehydrogenase (320 aa).

NAD(+)-binding positions include 8 to 13 (GAGQIG) and aspartate 33. Substrate is bound by residues arginine 82 and arginine 88. Residues asparagine 95 and 118–120 (ITN) contribute to the NAD(+) site. Residues asparagine 120 and arginine 151 each contribute to the substrate site. The active-site Proton acceptor is the histidine 175.

It belongs to the LDH/MDH superfamily. MDH type 3 family.

The enzyme catalyses (S)-malate + NAD(+) = oxaloacetate + NADH + H(+). Functionally, catalyzes the reversible oxidation of malate to oxaloacetate. This Pelagibacter ubique (strain HTCC1062) protein is Malate dehydrogenase.